An 87-amino-acid polypeptide reads, in one-letter code: Large ribosomal subunit protein bL27 (87 aa).

The segment at 1–21 (MAHKKAGGSSRNGRDSESKRL) is disordered.

The protein belongs to the bacterial ribosomal protein bL27 family.

The chain is Large ribosomal subunit protein bL27 from Burkholderia mallei (strain NCTC 10247).